Consider the following 62-residue polypeptide: MKCKKQLLVIFFAYFLVVNESEAIFGSLFSLGSKLLPTVFKLFSRKKQRALMKRDLEDIMDP.

A signal peptide spans M1–A23. Positions R49–P62 are excised as a propeptide.

It belongs to the non-disulfide-bridged peptide (NDBP) superfamily. Medium-length antimicrobial peptide (group 3) family. Ponericin-W subfamily. In terms of tissue distribution, expressed by the venom gland.

Its subcellular location is the secreted. It is found in the target cell membrane. Antimicrobial peptide with potent activity against a range of Gram-positive and Gram-negative bacteria. Has high hemolytic activity against erythrocytes. May act by disrupting the integrity of the bacterial cell membrane. The chain is Ponericin-W-like 32.2 from Lychas mucronatus (Chinese swimming scorpion).